Here is a 759-residue protein sequence, read N- to C-terminus: Protein YdeP (759 aa).

Residues Cys49 and Cys52 each contribute to the [4Fe-4S] cluster site.

This sequence belongs to the prokaryotic molybdopterin-containing oxidoreductase family. The cofactor is [4Fe-4S] cluster. It depends on Mo-bis(molybdopterin guanine dinucleotide) as a cofactor.

Probably involved in acid resistance. The protein is Protein YdeP (ydeP) of Escherichia coli (strain K12).